Here is a 472-residue protein sequence, read N- to C-terminus: Adenosylhomocysteinase (472 aa).

3 residues coordinate substrate: Thr61, Asp139, and Glu198. Position 199–201 (199–201) interacts with NAD(+); the sequence is TTT. Positions 228 and 232 each coordinate substrate. NAD(+) is bound by residues Asn233, 262-267, Glu285, Asn320, 341-343, and Asn386; these read GFGDVG and IGH.

It belongs to the adenosylhomocysteinase family. NAD(+) serves as cofactor.

Its subcellular location is the cytoplasm. The enzyme catalyses S-adenosyl-L-homocysteine + H2O = L-homocysteine + adenosine. The protein operates within amino-acid biosynthesis; L-homocysteine biosynthesis; L-homocysteine from S-adenosyl-L-homocysteine: step 1/1. May play a key role in the regulation of the intracellular concentration of adenosylhomocysteine. This Sphingopyxis alaskensis (strain DSM 13593 / LMG 18877 / RB2256) (Sphingomonas alaskensis) protein is Adenosylhomocysteinase.